A 452-amino-acid chain; its full sequence is MMITLRKLPLAVAVAAGVMSAQAMAVDFHGYARSGIGWTGSGGEQQCFQATGAQSKYRLGNECETYAELKLGQEVWKEGDKSFYFDTNVAYSVNQQNDWESTDPAFREANVQGKNLIEWLPGSTIWAGKRFYQRHDVHMIDFYYWDISGPGAGIENIDLGFGKLSLAATRSTEAGGSYTFSSQNIYDEVKDTANDVFDVRLAGLQTNPDGVLELGVDYGRANTTDGYKLADGASKDGWMFTAEHTQSMLKGYNKFVVQYATDAMTTQGKGQARGSDGSSSFTEELPDGTKINYANKVINNNGDMWRILDHGAISLGDKWDLMYVGMYQNIDWDNNLGTEWWTVGVRPMYKWTPIMSTLLEVGYDNVKSQQTGDRNNQYKITLAQQWQAGDSIWSRPAIRIFATYAKWDEKWGYIKDGDNISRYAAATNSGISTNSRGDSDEWTFGAQMEIWW.

Residues 1-25 (MMITLRKLPLAVAVAAGVMSAQAMA) form the signal peptide.

Belongs to the porin LamB (TC 1.B.3) family. Homotrimer formed of three 18-stranded antiparallel beta-barrels, containing three independent channels.

The protein localises to the cell outer membrane. It carries out the reaction beta-maltose(in) = beta-maltose(out). Its function is as follows. Involved in the transport of maltose and maltodextrins. The protein is Maltoporin of Salmonella choleraesuis (strain SC-B67).